Consider the following 416-residue polypeptide: UDP-N-acetylglucosamine 1-carboxyvinyltransferase (416 aa).

22-23 (KN) provides a ligand contact to phosphoenolpyruvate. R91 serves as a coordination point for UDP-N-acetyl-alpha-D-glucosamine. C115 serves as the catalytic Proton donor. A 2-(S-cysteinyl)pyruvic acid O-phosphothioketal modification is found at C115. UDP-N-acetyl-alpha-D-glucosamine contacts are provided by residues 120 to 124 (RPVDL), D303, and I325.

Belongs to the EPSP synthase family. MurA subfamily.

It localises to the cytoplasm. The catalysed reaction is phosphoenolpyruvate + UDP-N-acetyl-alpha-D-glucosamine = UDP-N-acetyl-3-O-(1-carboxyvinyl)-alpha-D-glucosamine + phosphate. It participates in cell wall biogenesis; peptidoglycan biosynthesis. Functionally, cell wall formation. Adds enolpyruvyl to UDP-N-acetylglucosamine. This is UDP-N-acetylglucosamine 1-carboxyvinyltransferase from Oleidesulfovibrio alaskensis (strain ATCC BAA-1058 / DSM 17464 / G20) (Desulfovibrio alaskensis).